The following is a 464-amino-acid chain: CRISPR system endoribonuclease Csm6 (464 aa).

Residues 1 to 190 form a CARF domain region; it reads MEDLDALWER…LRILPNPHEA (190 aa). The tract at residues 191 to 464 is HEPN domain; the sequence is LAEVDALFAK…LSPEPVPLGF (274 aa).

Belongs to the CRISPR-associated Csm6 family. Homodimer. The protein forms a twisted, head-to-head dimer; the composite ssRNase active site is formed at the dimer interface. Does not require a metal cofactor. is required as a cofactor.

Non-specific ssRNase activity is allosterically activated about 1000-fold by cyclic tetraadenylate (cA4), which probably binds to its CARF domain. Its function is as follows. CRISPR (clustered regularly interspaced short palindromic repeat) is an adaptive immune system that provides protection against mobile genetic elements (viruses, transposable elements and conjugative plasmids). CRISPR clusters contain spacers, sequences complementary to antecedent mobile elements, and target invading nucleic acids. CRISPR clusters are transcribed and processed into CRISPR RNA (crRNA). The type III-A Csm effector complex binds crRNA and acts as a crRNA-guided RNase, DNase and cyclic oligoadenylate synthase; binding of target RNA cognate to the crRNA is required for all activities. This protein is not part of the Csm effector complex. In terms of biological role, a single-strand-specific endoribonuclease (ssRNase) producing free 5'-OH. Activity is approximately 1000-fold stimulated by cyclic oligoadenylate (cOA); only cyclic tetraadenylate (cA4) stimulates the ssRNase activity while linear oligoadenylates do not activate the RNase. Another study showed stimulation by linear tetraadenylate at very high concentrations, but did not examine stimulation by cA4. The sequence is that of CRISPR system endoribonuclease Csm6 from Thermus thermophilus (strain ATCC 27634 / DSM 579 / HB8).